The primary structure comprises 545 residues: Intercellular adhesion molecule 1 (545 aa).

The N-terminal stretch at 1–27 (MASTRARPMLPLLLVLVAVVIPGPVGA) is a signal peptide. Residues 28 to 492 (QVSIHPTEAF…HLTVLYHDQN (465 aa)) lie on the Extracellular side of the membrane. 2 Ig-like C2-type domains span residues 41–103 (GGSV…QSSA) and 128–193 (GKNL…LDLR). The N-linked (GlcNAc...) asparagine glycan is linked to N47. Intrachain disulfides connect C48-C92, C52-C96, and C135-C186. An N-linked (GlcNAc...) asparagine glycan is attached at N154. Positions 177–179 (RGD) match the Cell attachment site motif. N183 and N202 each carry an N-linked (GlcNAc...) asparagine glycan. An Ig-like C2-type 3 domain is found at 230–297 (GTQQKFLCSL…LRCVLELADQ (68 aa)). An intrachain disulfide couples C237 to C290. N-linked (GlcNAc...) asparagine glycosylation is found at N309, N344, N396, N417, N439, and N464. One can recognise an Ig-like C2-type 4 domain in the interval 325–389 (GDQVTVKCEA…FFCSAALEVD (65 aa)). A disulfide bridge connects residues C332 and C382. A disordered region spans residues 343 to 365 (LNSTSPRPPTSQGTSPRPPTSQI). 3 cysteine pairs are disulfide-bonded: C414/C430, C430/C469, and C442/C469. The Ig-like C2-type 5 domain maps to 423-476 (GSQQTLTCQPQGNPAPNLTCSRKADGVPLPIGMVKSVKREMNGTYKCRAFSSRG). The chain crosses the membrane as a helical span at residues 493-517 (TWVIIVGVLVLIIAGFVIVASIYTY). The Cytoplasmic portion of the chain corresponds to 518–545 (YRQRKIRIYKLQKAQEEALKLKVQAPPP).

Belongs to the immunoglobulin superfamily. ICAM family. In terms of assembly, homodimer. Interacts with MUC1 and promotes cell aggregation in epithelial cells. Interacts with ARHGEF26/SGEF. Interacts (on T cell side) with CD81, CD247 and CD9 at immunological synapses between antigen-presenting cells and T cells. Post-translationally, monoubiquitinated, which is promoted by MARCH9 and leads to endocytosis.

Its subcellular location is the membrane. Its function is as follows. ICAM proteins are ligands for the leukocyte adhesion protein LFA-1 (integrin alpha-L/beta-2). During leukocyte trans-endothelial migration, ICAM1 engagement promotes the assembly of endothelial apical cups through ARHGEF26/SGEF and RHOG activation. The sequence is that of Intercellular adhesion molecule 1 (Icam1) from Rattus norvegicus (Rat).